The primary structure comprises 181 residues: Resolvase/recombinase (181 aa).

The region spanning 2 to 137 (RLFGYARVST…EGRLEAKAKG (136 aa)) is the Resolvase/invertase-type recombinase catalytic domain. Ser-10 serves as the catalytic O-(5'-phospho-DNA)-serine intermediate. A DNA-binding region (H-T-H motif) is located at residues 161–180 (AMEIAKRLKIGRSTVYKVLA).

Belongs to the site-specific recombinase resolvase family.

In terms of biological role, site-specific recombination protein. In Pseudomonas putida (Arthrobacter siderocapsulatus), this protein is Resolvase/recombinase.